A 2110-amino-acid chain; its full sequence is Protein Ycf2 (2110 aa).

The disordered stretch occupies residues 190-209 (DSSQLKGSSDQSRDPLDSIS). Position 1442–1449 (1442–1449 (GSIGTGRS)) interacts with ATP.

It belongs to the Ycf2 family.

Its subcellular location is the plastid. The protein resides in the chloroplast stroma. In terms of biological role, probable ATPase of unknown function. Its presence in a non-photosynthetic plant (Epifagus virginiana) and experiments in tobacco indicate that it has an essential function which is probably not related to photosynthesis. This chain is Protein Ycf2, found in Panax ginseng (Korean ginseng).